The chain runs to 505 residues: MSSLARWIITIGLEVHVQLSTKLKLFSRALAENHKAPNSAVSFFDISLPGTLPIVNPEAIRLATKAALVCNCEIAPSLEFDRKHYVYSDQRAGFQITQKRRPLGTNGFVRLNAALDGVEKDQLVEIKCLQLEQDTGKTVNELNEDLVLLDFNRANVPLIEVVTAPCFHSPHDAACFLRKLQTILRLANVSDAKMELGNMRCDVNVSVASAENPTKQLATVELKNLPSIRYVEIASELEAKRQIELLNNGSSPVPETRSYDVEKNATVFLRKKRGPSDYMYLPEADIPEITLTSAYVDDVRKSIGPSVDELLETLLQKKYFNLQDAKALLQTEDGLSYYQVLVGELEKVTSSMSPDVQLKAEKLIPFWLVNEYVGDCANAPDEKRDLDTIPPADLAFLLGNLANGTLSAYAAKHILQLAVQDPKKNSIYKLVNENANAEFDENTLKDLVNELIQANGDKVNALKVGKDGVLNWFIGNVMRRSSGKAKPDEIKRLINNTVLCENSSK.

The protein belongs to the GatB/GatE family. GatB subfamily. As to quaternary structure, subunit of the heterotrimeric GatCAB amidotransferase (AdT) complex, composed of A, B and C subunits.

It localises to the mitochondrion. It catalyses the reaction L-glutamyl-tRNA(Gln) + L-glutamine + ATP + H2O = L-glutaminyl-tRNA(Gln) + L-glutamate + ADP + phosphate + H(+). In terms of biological role, allows the formation of correctly charged Gln-tRNA(Gln) through the transamidation of misacylated Glu-tRNA(Gln) in the mitochondria. The reaction takes place in the presence of glutamine and ATP through an activated gamma-phospho-Glu-tRNA(Gln). The sequence is that of Glutamyl-tRNA(Gln) amidotransferase subunit B, mitochondrial from Schizosaccharomyces japonicus (strain yFS275 / FY16936) (Fission yeast).